Consider the following 430-residue polypeptide: MKTSIFKSLYFQVLAAITIGILLGHFYPQLGEQMKPLGDGFVKLIKMIIAPVIFCTVVTGIAGMESMKSVGRTGAAALLYFEVVSTIALIIGLVVVNVVQPGVGMNIDPSTLDASAVAVYTQQASQQGLIPFLMDVIPASVVGAFASGNILQVLLFAVMFGFALHRLGPKGKVIFDVIESFSKVIFGVINMIMKLAPLGAFGAMAFTIGKYGVGTLVQLGQLILCFYLTCILFVFLVLGSIAKATGFSIFKFIRYIREELLIVLGTSSSESVLPRMLEKMEKVGCKKSVVGLVIPTGYSFNLDGTSIYLTMAAVFIAQATNSHMDIWHQITLLVVLLLSSKGAAGVTGSGFIVLAATLSAVGHLPVAGLALILGIDRFMSEARALTNLIGNGVATIVVAKYCRELDEKKLDAELSGNNKNDNAATPTAQS.

The next 9 helical transmembrane spans lie at 8–28, 44–64, 76–96, 144–164, 184–204, 222–242, 289–309, 326–346, and 352–372; these read SLYF…HFYP, LIKM…IAGM, AALL…LVVV, AFAS…GFAL, VIFG…FGAM, LILC…GSIA, VVGL…SIYL, IWHQ…AAGV, and IVLA…LALI.

It belongs to the dicarboxylate/amino acid:cation symporter (DAACS) (TC 2.A.23) family.

It is found in the cell inner membrane. Its function is as follows. Responsible for the transport of dicarboxylates such as succinate, fumarate, and malate from the periplasm across the membrane. The chain is C4-dicarboxylate transport protein from Pectobacterium atrosepticum (strain SCRI 1043 / ATCC BAA-672) (Erwinia carotovora subsp. atroseptica).